A 73-amino-acid chain; its full sequence is Putative antitoxin VapB9 (73 aa).

Its function is as follows. Antitoxin component of a possible type II toxin-antitoxin (TA) system. The cognate toxin is VapC9. The sequence is that of Putative antitoxin VapB9 (vapB9) from Mycobacterium tuberculosis (strain CDC 1551 / Oshkosh).